A 275-amino-acid polypeptide reads, in one-letter code: MKIVVAKNIGFCFGVERAIRTVEELLDEGKKVVTDGEIVHNKQVMEKLTKKGLKVSSEITDGEVFVVRAHGIPKDRLEELKRIFPEVVDLTCPIVSQLFKTAQRYAKERKVIVFGKEDHPEMVALKGYAPAIVTKVPFKLEEKKVVFLSQTTSSLEEYKEFVVTMIRMNEFEEAVFLNTICPVTVNREREVEELSRICELSIVVGGRHSSNTGKLFRIASKHSKTIWIESPDELPADVVKYGTVCVFSGTSTPNSLIENVVRKLKEMEGKRDGTI.

C12 serves as a coordination point for [4Fe-4S] cluster. H40 and H70 together coordinate (2E)-4-hydroxy-3-methylbut-2-enyl diphosphate. Dimethylallyl diphosphate contacts are provided by H40 and H70. The isopentenyl diphosphate site is built by H40 and H70. Residue C92 participates in [4Fe-4S] cluster binding. H119 lines the (2E)-4-hydroxy-3-methylbut-2-enyl diphosphate pocket. H119 serves as a coordination point for dimethylallyl diphosphate. Residue H119 coordinates isopentenyl diphosphate. The active-site Proton donor is the E121. (2E)-4-hydroxy-3-methylbut-2-enyl diphosphate is bound at residue T151. C181 lines the [4Fe-4S] cluster pocket. S209, S210, N211, and S251 together coordinate (2E)-4-hydroxy-3-methylbut-2-enyl diphosphate. Residues S209, S210, N211, and S251 each contribute to the dimethylallyl diphosphate site. S209, S210, N211, and S251 together coordinate isopentenyl diphosphate.

It belongs to the IspH family. It depends on [4Fe-4S] cluster as a cofactor.

It carries out the reaction isopentenyl diphosphate + 2 oxidized [2Fe-2S]-[ferredoxin] + H2O = (2E)-4-hydroxy-3-methylbut-2-enyl diphosphate + 2 reduced [2Fe-2S]-[ferredoxin] + 2 H(+). The enzyme catalyses dimethylallyl diphosphate + 2 oxidized [2Fe-2S]-[ferredoxin] + H2O = (2E)-4-hydroxy-3-methylbut-2-enyl diphosphate + 2 reduced [2Fe-2S]-[ferredoxin] + 2 H(+). It participates in isoprenoid biosynthesis; dimethylallyl diphosphate biosynthesis; dimethylallyl diphosphate from (2E)-4-hydroxy-3-methylbutenyl diphosphate: step 1/1. It functions in the pathway isoprenoid biosynthesis; isopentenyl diphosphate biosynthesis via DXP pathway; isopentenyl diphosphate from 1-deoxy-D-xylulose 5-phosphate: step 6/6. Its function is as follows. Catalyzes the conversion of 1-hydroxy-2-methyl-2-(E)-butenyl 4-diphosphate (HMBPP) into a mixture of isopentenyl diphosphate (IPP) and dimethylallyl diphosphate (DMAPP). Acts in the terminal step of the DOXP/MEP pathway for isoprenoid precursor biosynthesis. The polypeptide is 4-hydroxy-3-methylbut-2-enyl diphosphate reductase (Thermotoga petrophila (strain ATCC BAA-488 / DSM 13995 / JCM 10881 / RKU-1)).